The chain runs to 289 residues: Cysteine-rich venom protein Mr30 (289 aa).

The first 24 residues, 1–24 (MLSTMQTVGAILMLSIVFVAGTKR), serve as a signal peptide directing secretion. The residue at position 33 (Glu33) is a 4-carboxyglutamate. Residues 62–184 (VRMHNVIRAT…GEDRYFVCNY (123 aa)) form the SCP domain.

It belongs to the CRISP family. Post-translationally, contains 11 disulfide bonds. Expressed by the venom duct.

Its subcellular location is the secreted. Its function is as follows. Has no proteolytic activity. This is Cysteine-rich venom protein Mr30 from Conus marmoreus (Marble cone).